The primary structure comprises 329 residues: Homeobox protein Nkx-3.2 (329 aa).

Residues 107 to 188 (GLGSPCGGAP…PDPSPPDEDP (82 aa)) form a disordered region. Residues 110 to 124 (SPCGGAPGAGAGGEP) are compositionally biased toward gly residues. Residues 138-160 (ELGRPGDIGERKKQRPLEARAKG) are compositionally biased toward basic and acidic residues. The homeobox DNA-binding region spans 202 to 261 (KKRSRAAFSHAQVFELERRFNHQRYLSGPERADLAASLKLTETQVKIWFQNRRYKTKRRQ).

The protein belongs to the NK-3 homeobox family. As to expression, first expressed in developing facial cartilage in early tailbud embryos, with expression localized to the basihyobranchial, palatoquadrate and possibly Meckel's cartilages. Shortly after, a second area of expression is seen in the musculature of the anterior gut. During late embryogenesis, gut expression extends into hindgut tissues. In adults, expressed at a high level in the kidney, pancreas, spleen and stomach and at a slightly lower level in the intestine, skeletal muscle and tongue. Adult heart, liver and lung show little or no expression.

It localises to the nucleus. This chain is Homeobox protein Nkx-3.2 (nkx3-2), found in Xenopus laevis (African clawed frog).